Consider the following 546-residue polypeptide: Carboxypeptidase Y homolog A (546 aa).

Positions 1–17 (MKLLASTVLMGAAAASI) are cleaved as a signal peptide. Residues 18–132 (APQQQVLKNP…KLEKYNMRAK (115 aa)) constitute a propeptide that is removed on maturation. 5 cysteine pairs are disulfide-bonded: C186–C426, C320–C334, C344–C367, C351–C360, and C389–C396. N-linked (GlcNAc...) asparagine glycosylation is present at N217. The active site involves S273. D465 is an active-site residue. An N-linked (GlcNAc...) asparagine glycan is attached at N512. H523 is a catalytic residue.

Belongs to the peptidase S10 family.

The protein localises to the vacuole. It carries out the reaction Release of a C-terminal amino acid with broad specificity.. In terms of biological role, vacuolar carboxypeptidase involved in degradation of small peptides. Digests preferentially peptides containing an aliphatic or hydrophobic residue in P1' position, as well as methionine, leucine or phenylalanine in P1 position of ester substrate. This is Carboxypeptidase Y homolog A (cpyA) from Sclerotinia sclerotiorum (strain ATCC 18683 / 1980 / Ss-1) (White mold).